The primary structure comprises 269 residues: HTH-type transcriptional regulator Rv0792c (269 aa).

Residues 20 to 88 (VPASTQLAEA…QGLGTFVADP (69 aa)) enclose the HTH gntR-type domain. Positions 48–67 (ERELIDRSGLSRVTVRAAVG) form a DNA-binding region, H-T-H motif.

Homodimer.

Its activity is regulated as follows. DNA-binding activity is increased in the presence of L-arabinose and inhibited by the small molecule I-OMe-Tyrphostin. Transcriptional regulator required for survival in oxidative stress and for establishing infection in host tissues. Regulates the expression of a subset of genes involved in oxidative stress adaptation and virulence, enabling the bacteria to adapt and persist in host tissues. This Mycobacterium tuberculosis (strain ATCC 25618 / H37Rv) protein is HTH-type transcriptional regulator Rv0792c.